The following is a 674-amino-acid chain: L-type lectin-domain containing receptor kinase IV.3 (674 aa).

Positions 1-22 are cleaved as a signal peptide; it reads MFFKLFTIFFFFIILLSKPLNS. N-linked (GlcNAc...) asparagine glycans are attached at residues N21, N28, N40, N81, N136, and N188. Over 23-296 the chain is Extracellular; sequence SSQSLNFTYN…TSLQRFYKNR (274 aa). Positions 26-263 are legume-lectin like; sequence SLNFTYNSFH…SEHFVFGWSF (238 aa). A helical membrane pass occupies residues 297 to 317; that stretch reads MPLFSLLLIPVLFVVSLIFLV. Residues 318–674 lie on the Cytoplasmic side of the membrane; it reads RFIVRRRRKF…IAYSIVSGGR (357 aa). The 278-residue stretch at 355–632 folds into the Protein kinase domain; sequence FKDKDLLGSG…LQYLRGDATL (278 aa). ATP contacts are provided by residues 361–369 and K384; that span reads LGSGGFGRV. D480 serves as the catalytic Proton acceptor.

It in the C-terminal section; belongs to the protein kinase superfamily. Ser/Thr protein kinase family. In the N-terminal section; belongs to the leguminous lectin family.

It localises to the cell membrane. It catalyses the reaction L-seryl-[protein] + ATP = O-phospho-L-seryl-[protein] + ADP + H(+). The enzyme catalyses L-threonyl-[protein] + ATP = O-phospho-L-threonyl-[protein] + ADP + H(+). The polypeptide is L-type lectin-domain containing receptor kinase IV.3 (LECRK43) (Arabidopsis thaliana (Mouse-ear cress)).